A 284-amino-acid polypeptide reads, in one-letter code: Protein G1-like9 (284 aa).

The disordered stretch occupies residues M1 to E69. 2 stretches are compositionally biased toward low complexity: residues A13–S32 and Q40–A63. In terms of domain architecture, ALOG spans R67–R194. The Nuclear localization signal signature appears at K192–R196. The interval V209–S284 is disordered. The segment covering T246–S284 has biased composition (low complexity).

This sequence belongs to the plant homeotic and developmental regulators ALOG protein family.

The protein resides in the nucleus. Its function is as follows. Probable transcription regulator that acts as a developmental regulator by promoting cell growth in response to light. The polypeptide is Protein G1-like9 (Oryza sativa subsp. indica (Rice)).